We begin with the raw amino-acid sequence, 278 residues long: S-methyl-5'-thioadenosine phosphorylase (278 aa).

Phosphate-binding positions include Ser13, 55–56 (RH), and 88–89 (TA). Position 190 (Met190) interacts with substrate. Phosphate is bound at residue Thr191. 214 to 216 (DYD) lines the substrate pocket.

This sequence belongs to the PNP/MTAP phosphorylase family. MTAP subfamily. As to quaternary structure, homotrimer.

The protein localises to the cytoplasm. It localises to the nucleus. The enzyme catalyses S-methyl-5'-thioadenosine + phosphate = 5-(methylsulfanyl)-alpha-D-ribose 1-phosphate + adenine. Its pathway is amino-acid biosynthesis; L-methionine biosynthesis via salvage pathway; S-methyl-5-thio-alpha-D-ribose 1-phosphate from S-methyl-5'-thioadenosine (phosphorylase route): step 1/1. Catalyzes the reversible phosphorylation of S-methyl-5'-thioadenosine (MTA) to adenine and 5-methylthioribose-1-phosphate. Involved in the breakdown of MTA, a major by-product of polyamine biosynthesis. Responsible for the first step in the methionine salvage pathway after MTA has been generated from S-adenosylmethionine. Has broad substrate specificity with 6-aminopurine nucleosides as preferred substrates. In Anopheles gambiae (African malaria mosquito), this protein is S-methyl-5'-thioadenosine phosphorylase.